A 440-amino-acid polypeptide reads, in one-letter code: Proline--tRNA ligase (440 aa).

The protein belongs to the class-II aminoacyl-tRNA synthetase family. ProS type 2 subfamily. Homodimer.

The protein resides in the cytoplasm. The enzyme catalyses tRNA(Pro) + L-proline + ATP = L-prolyl-tRNA(Pro) + AMP + diphosphate. Catalyzes the attachment of proline to tRNA(Pro) in a two-step reaction: proline is first activated by ATP to form Pro-AMP and then transferred to the acceptor end of tRNA(Pro). The polypeptide is Proline--tRNA ligase (Agrobacterium fabrum (strain C58 / ATCC 33970) (Agrobacterium tumefaciens (strain C58))).